Here is a 252-residue protein sequence, read N- to C-terminus: Sororin (252 aa).

Disordered stretches follow at residues 1 to 48 (MSGR…WPKT) and 72 to 142 (AVQS…SKKV). Residues serine 21, serine 33, serine 35, serine 75, serine 79, and serine 83 each carry the phosphoserine modification. Positions 86 to 104 (LEKENEPPGRELTKEDLFK) are enriched in basic and acidic residues. A KEN box motif is present at residues 88-90 (KEN). Threonine 98 is subject to Phosphothreonine. The span at 105 to 116 (THSVPATPTSTP) shows a compositional bias: low complexity. Phosphoserine is present on serine 107. Residues threonine 111 and threonine 115 each carry the phosphothreonine modification. The span at 124–140 (SSSKEGELDARDLEMSK) shows a compositional bias: basic and acidic residues. Serine 154 carries the post-translational modification Phosphoserine. Threonine 159 is modified (phosphothreonine). The short motif at 166 to 168 (FGF) is the FGF motif element. The tract at residues 199-222 (WAPDMTLPGISPPPEKQKRKKKKM) is disordered. Serine 209 carries the post-translational modification Phosphoserine. Residues 230–252 (LDEWAAAMNAEFEAAEQFDLLVE) are C-terminal Sororin domain.

This sequence belongs to the sororin family. As to quaternary structure, interacts with the APC/C complex. Interacts with the chromatin-bound cohesin complex; the interaction is indirect, occurs after DNA replication and requires acetylation of the cohesin component SMC3. Interacts (via the FGF motif) with PDS5A and PDS5B; the interaction is direct and prevents the interaction of PDS5A with WAPL. In terms of processing, phosphorylated. Phosphorylation, as cells enter mitosis, disrupts the interaction with PDS5A and relieves the inhibition of WAPL by CDCA5. Ubiquitinated by the APC/C complex in G1, leading to its degradation.

It localises to the nucleus. The protein resides in the chromosome. The protein localises to the cytoplasm. In terms of biological role, regulator of sister chromatid cohesion in mitosis stabilizing cohesin complex association with chromatin. May antagonize the action of WAPL which stimulates cohesin dissociation from chromatin. Cohesion ensures that chromosome partitioning is accurate in both meiotic and mitotic cells and plays an important role in DNA repair. Required for efficient DNA double-stranded break repair. In Homo sapiens (Human), this protein is Sororin (CDCA5).